A 137-amino-acid polypeptide reads, in one-letter code: Large ribosomal subunit protein uL16c (137 aa).

Belongs to the universal ribosomal protein uL16 family. Part of the 50S ribosomal subunit.

It localises to the plastid. It is found in the chloroplast. The sequence is that of Large ribosomal subunit protein uL16c from Vigna unguiculata (Cowpea).